Here is a 352-residue protein sequence, read N- to C-terminus: Schlafen-like protein 4 (352 aa).

An SLFN-like fold region spans residues 87-235 (FEYQSNFSEV…SDKVYQISSG (149 aa)). The helical transmembrane segment at 326-343 (IQNIGWIFFGTALSCCIY) threads the bilayer.

This sequence belongs to the Schlafen family. As to quaternary structure, component of the PUCH (precursor of 21U RNA 5'-end cleavage holoenzyme) complex; consisting of tofu-1, tofu-2 and either slfl-3 or slfl-4.

Its subcellular location is the membrane. Component of the trimeric PUCH (precursor of 21U RNA 5'-end cleavage holoenzyme) complex, that acts as an endoribonuclease processing the 5'-end of precursor Piwi-interacting RNAs (piRNAs). The PUCH complex consists of tofu-1, tofu-2 and either slfl-3 or slfl-4, where tofu-2 exhibits endoribonuclease activity. PUCH-mediated processing strictly requires a 7-methyl-G cap (m7 G-cap) and an uracil at position three (U3). PUCH also exhibits a strict bias for piRNA precursors with an A or G at position 1. Mature piRNA production is enhanced by the interaction of PUCH with the PETISCO complex, which is stabilizing piRNA precursors and allows their processing by PUCH. The protein is Schlafen-like protein 4 of Caenorhabditis elegans.